The chain runs to 1475 residues: Amylopullulanase (1475 aa).

An N-terminal signal peptide occupies residues M1 to A31. Ca(2+) contacts are provided by D245, N247, D285, D340, N398, D400, N403, D404, G449, and D451. The substrate site is built by H524 and R627. The active-site Nucleophile is the D629. The Proton donor role is filled by E658. Residues H734–D735, D794, and R798 contribute to the substrate site. Fibronectin type-III domains are found at residues A928–P1019 and T1164–I1257. The CBM20 domain maps to P1255–D1362.

Belongs to the glycosyl hydrolase 13 family. Ca(2+) serves as cofactor.

The enzyme catalyses Endohydrolysis of (1-&gt;4)-alpha-D-glucosidic linkages in polysaccharides containing three or more (1-&gt;4)-alpha-linked D-glucose units.. It catalyses the reaction Hydrolysis of (1-&gt;6)-alpha-D-glucosidic linkages in pullulan, amylopectin and glycogen, and in the alpha- and beta-limit dextrins of amylopectin and glycogen.. This is Amylopullulanase (apu) from Thermoanaerobacter thermohydrosulfuricus (Clostridium thermohydrosulfuricum).